Consider the following 554-residue polypeptide: Malate synthase 1 (554 aa).

The Proton acceptor role is filled by arginine 177. Aspartate 457 acts as the Proton donor in catalysis. The SKL peroxisome targeting motif motif lies at 552–554 (SKL).

Belongs to the malate synthase family. Interacts with PEX9.

The protein localises to the peroxisome matrix. It catalyses the reaction glyoxylate + acetyl-CoA + H2O = (S)-malate + CoA + H(+). The protein operates within carbohydrate metabolism; glyoxylate cycle; (S)-malate from isocitrate: step 2/2. In terms of biological role, malate synthase which takes part in the glyoxylate cycle. MLS1 activity is essential for cells to grow on oleic acid as a sole carbon source. Two steps of the glyoxylate cycle take place in the cytosol, the splitting of isocitrate into succinate and glyoxylate, and the dehydrogenation of malate to oxaloacetate. However, the formation of malate from glyoxylate and acetyl-CoA undertaken MLS1, occurs in the peroxisomes when cells are grown on oleic acid. The source of acetyl-CoA being either peroxisomal when breaking down fatty acids, or cytosolic when extra-cellular two-carbon substrates are used, therefore, although not strictly essential, the peroxisomal localization of MLS1 appears to be advantageous for cells growing on oleic acid, in that acetyl-CoA production and utilization are thereby intimately compartmentalized together to increase efficiency. The polypeptide is Malate synthase 1 (Saccharomyces cerevisiae (strain ATCC 204508 / S288c) (Baker's yeast)).